Consider the following 402-residue polypeptide: B box and SPRY domain-containing protein (402 aa).

Positions 1-20 (MSAEGAEPGPGSGSGPGPGP) are disordered. The B box-type zinc-finger motif lies at 17-65 (GPGPLCPEHGQALSWFCGSERRPVCAACAGLGGRCRGHRIRRAEERAEE). The B30.2/SPRY domain maps to 212–402 (PLLTQLWATA…VADQTISIVR (191 aa)).

Interacts with TRPV5 and TRPV6. Interacts with YWHAZ/14-3-3 protein zeta.

It is found in the cytoplasm. It localises to the membrane. Its function is as follows. May regulate epithelial calcium transport by inhibiting TRPV5 activity. The protein is B box and SPRY domain-containing protein (BSPRY) of Homo sapiens (Human).